A 232-amino-acid polypeptide reads, in one-letter code: Thiamine import ATP-binding protein ThiQ (232 aa).

Positions 2 to 230 (LKLTDITWLY…KASASALLGI (229 aa)) constitute an ABC transporter domain. Position 32 to 39 (32 to 39 (GPSGAGKS)) interacts with ATP.

The protein belongs to the ABC transporter superfamily. Thiamine importer (TC 3.A.1.19.1) family. The complex is composed of two ATP-binding proteins (ThiQ), two transmembrane proteins (ThiP) and a solute-binding protein (ThiB).

It localises to the cell inner membrane. The enzyme catalyses thiamine(out) + ATP + H2O = thiamine(in) + ADP + phosphate + H(+). Its function is as follows. Part of the ABC transporter complex ThiBPQ involved in thiamine import. Responsible for energy coupling to the transport system. This Escherichia coli O6:K15:H31 (strain 536 / UPEC) protein is Thiamine import ATP-binding protein ThiQ.